We begin with the raw amino-acid sequence, 335 residues long: Holliday junction branch migration complex subunit RuvB (335 aa).

The tract at residues 4 to 183 (ADNLNVTSII…FGIVQRLEFY (180 aa)) is large ATPase domain (RuvB-L). Residues R23, G64, K67, T68, T69, 130-132 (EDY), R173, Y183, and R220 contribute to the ATP site. T68 is a binding site for Mg(2+). The small ATPAse domain (RuvB-S) stretch occupies residues 184–254 (PTKDLQNIIS…VAMNALNMLN (71 aa)). A head domain (RuvB-H) region spans residues 257-335 (TAGFNFMDRQ…HFSLKQSRDI (79 aa)). Residues R293, R312, and R317 each coordinate DNA.

Belongs to the RuvB family. As to quaternary structure, homohexamer. Forms an RuvA(8)-RuvB(12)-Holliday junction (HJ) complex. HJ DNA is sandwiched between 2 RuvA tetramers; dsDNA enters through RuvA and exits via RuvB. An RuvB hexamer assembles on each DNA strand where it exits the tetramer. Each RuvB hexamer is contacted by two RuvA subunits (via domain III) on 2 adjacent RuvB subunits; this complex drives branch migration. In the full resolvosome a probable DNA-RuvA(4)-RuvB(12)-RuvC(2) complex forms which resolves the HJ.

Its subcellular location is the cytoplasm. It carries out the reaction ATP + H2O = ADP + phosphate + H(+). The RuvA-RuvB-RuvC complex processes Holliday junction (HJ) DNA during genetic recombination and DNA repair, while the RuvA-RuvB complex plays an important role in the rescue of blocked DNA replication forks via replication fork reversal (RFR). RuvA specifically binds to HJ cruciform DNA, conferring on it an open structure. The RuvB hexamer acts as an ATP-dependent pump, pulling dsDNA into and through the RuvAB complex. RuvB forms 2 homohexamers on either side of HJ DNA bound by 1 or 2 RuvA tetramers; 4 subunits per hexamer contact DNA at a time. Coordinated motions by a converter formed by DNA-disengaged RuvB subunits stimulates ATP hydrolysis and nucleotide exchange. Immobilization of the converter enables RuvB to convert the ATP-contained energy into a lever motion, pulling 2 nucleotides of DNA out of the RuvA tetramer per ATP hydrolyzed, thus driving DNA branch migration. The RuvB motors rotate together with the DNA substrate, which together with the progressing nucleotide cycle form the mechanistic basis for DNA recombination by continuous HJ branch migration. Branch migration allows RuvC to scan DNA until it finds its consensus sequence, where it cleaves and resolves cruciform DNA. This chain is Holliday junction branch migration complex subunit RuvB, found in Baumannia cicadellinicola subsp. Homalodisca coagulata.